The chain runs to 723 residues: MEHKPTHTSGQCPVMHGGATSSNSSNVAWWPKALNLDILHQHDRKSNPMGADFSYREELKKLDVEALKRDLKALMTDSQDWWPADWGHYGGLMIRMAWHSAGSYRVGDGRGGADTGNQRFAPLNSWPDNANLDKARRLLWPIKQKYGNKISWADLMILAGNMAYESMGLKTFGFAFGREDIWHPEKDIYWGAEQEWLAPSGAENSRYSGERDLENPLAAVMMGLIYVNPEGVDGNPDPLKTAKDMRVTFARMGMNDEETVALTAGGHTVGKAHGNGNAANLGADPESADLEEQGLGWNNHKSRGIGRDTVTSGIEGAWTTNPTQWDNGFFHLLFSYDWWLQKSPAGAWQWEPVNIKEEDKPVDVEDPTIRHNPIMTDADMALKLDPEYRKISERFHKDPAYFSETFARAWFKLTHRDMGPKARYFGPDVPVEELIWQDPVPTGRKDYDVDAVKAKIIASGLSTGELVSTAWDSARTFRNSDKRGGANGARIRLAPQKDWLGNEPEKLAKVLNVLEAIASEFNISVADTIVLAGNVGVEQAAKAAGIAITVPFAAGRGDATIEQTDVESFEVLEPIADGFRNWQKQHYAVNPEELLLDRAQLLGLSAPEMTVLIGGLRVIGTNHGDNKHGVFTDNVGALSNDFFVNLTDMRYTWKPTGRNSYDIVERNSGNVKWTATRVDLVFGSNSILRAYAEVYAQDDNKEKFVKDFVAAWTKVMNADRFDI.

Positions 98 to 226 (WHSAGSYRVG…LAAVMMGLIY (129 aa)) form a cross-link, tryptophyl-tyrosyl-methioninium (Trp-Tyr) (with M-252). Catalysis depends on His99, which acts as the Proton acceptor. The segment at residues 226-252 (YVNPEGVDGNPDPLKTAKDMRVTFARM) is a cross-link (tryptophyl-tyrosyl-methioninium (Tyr-Met) (with W-98)). His267 contributes to the heme b binding site.

Belongs to the peroxidase family. Peroxidase/catalase subfamily. As to quaternary structure, homodimer or homotetramer. Heme b is required as a cofactor. In terms of processing, formation of the three residue Trp-Tyr-Met cross-link is important for the catalase, but not the peroxidase activity of the enzyme.

It catalyses the reaction H2O2 + AH2 = A + 2 H2O. The catalysed reaction is 2 H2O2 = O2 + 2 H2O. Functionally, bifunctional enzyme with both catalase and broad-spectrum peroxidase activity. The sequence is that of Catalase-peroxidase from Vibrio vulnificus (strain YJ016).